Reading from the N-terminus, the 229-residue chain is NAD-dependent protein deacetylase (229 aa).

A Deacetylase sirtuin-type domain is found at 1–229 (MNKLNEALKK…SDAVKVFAEI (229 aa)). Residues Ala20, Arg32, Gln96, Ile98, Asp99, His114, Thr181, Ser182, Asn205, and Val223 each coordinate NAD(+). Residues Ile98 and Asp99 each contribute to the nicotinamide site. Catalysis depends on His114, which acts as the Proton acceptor.

The protein belongs to the sirtuin family. Class U subfamily.

It is found in the cytoplasm. It carries out the reaction N(6)-acetyl-L-lysyl-[protein] + NAD(+) + H2O = 2''-O-acetyl-ADP-D-ribose + nicotinamide + L-lysyl-[protein]. NAD-dependent protein deacetylase which modulates the activities of several enzymes which are inactive in their acetylated form. This is NAD-dependent protein deacetylase from Listeria monocytogenes serotype 4b (strain F2365).